Reading from the N-terminus, the 235-residue chain is Small heat shock protein, chloroplastic (235 aa).

2 disordered regions span residues 1–23 (MAYT…TSKI) and 51–80 (TGDN…ERRP). Residues 52–63 (GDNKDTSVDVHH) show a composition bias toward basic and acidic residues. The segment covering 64–74 (SSAQGGNNQGT) has biased composition (polar residues). Positions 126–235 (SGTGEIRTPW…EKKVIDVQIN (110 aa)) constitute a sHSP domain.

The protein belongs to the small heat shock protein (HSP20) family. In terms of tissue distribution, in fruits, flowers, leaves, and stems.

It is found in the plastid. The protein localises to the chloroplast. In Solanum lycopersicum (Tomato), this protein is Small heat shock protein, chloroplastic (HSP21).